A 317-amino-acid chain; its full sequence is 4-hydroxy-3-methylbut-2-enyl diphosphate reductase (317 aa).

Cysteine 12 lines the [4Fe-4S] cluster pocket. Positions 41 and 74 each coordinate (2E)-4-hydroxy-3-methylbut-2-enyl diphosphate. Dimethylallyl diphosphate-binding residues include histidine 41 and histidine 74. Isopentenyl diphosphate contacts are provided by histidine 41 and histidine 74. [4Fe-4S] cluster is bound at residue cysteine 97. Position 125 (histidine 125) interacts with (2E)-4-hydroxy-3-methylbut-2-enyl diphosphate. Histidine 125 contacts dimethylallyl diphosphate. Residue histidine 125 coordinates isopentenyl diphosphate. The active-site Proton donor is the glutamate 127. Threonine 168 provides a ligand contact to (2E)-4-hydroxy-3-methylbut-2-enyl diphosphate. Cysteine 198 contributes to the [4Fe-4S] cluster binding site. (2E)-4-hydroxy-3-methylbut-2-enyl diphosphate contacts are provided by serine 226, serine 227, asparagine 228, and serine 270. Serine 226, serine 227, asparagine 228, and serine 270 together coordinate dimethylallyl diphosphate. Residues serine 226, serine 227, asparagine 228, and serine 270 each contribute to the isopentenyl diphosphate site.

This sequence belongs to the IspH family. Homodimer. It depends on [4Fe-4S] cluster as a cofactor.

It carries out the reaction isopentenyl diphosphate + 2 oxidized [2Fe-2S]-[ferredoxin] + H2O = (2E)-4-hydroxy-3-methylbut-2-enyl diphosphate + 2 reduced [2Fe-2S]-[ferredoxin] + 2 H(+). The catalysed reaction is dimethylallyl diphosphate + 2 oxidized [2Fe-2S]-[ferredoxin] + H2O = (2E)-4-hydroxy-3-methylbut-2-enyl diphosphate + 2 reduced [2Fe-2S]-[ferredoxin] + 2 H(+). It functions in the pathway isoprenoid biosynthesis; dimethylallyl diphosphate biosynthesis; dimethylallyl diphosphate from (2E)-4-hydroxy-3-methylbutenyl diphosphate: step 1/1. The protein operates within isoprenoid biosynthesis; isopentenyl diphosphate biosynthesis via DXP pathway; isopentenyl diphosphate from 1-deoxy-D-xylulose 5-phosphate: step 6/6. Catalyzes the conversion of 1-hydroxy-2-methyl-2-(E)-butenyl 4-diphosphate (HMBPP) into a mixture of isopentenyl diphosphate (IPP) and dimethylallyl diphosphate (DMAPP). Acts in the terminal step of the DOXP/MEP pathway for isoprenoid precursor biosynthesis. This chain is 4-hydroxy-3-methylbut-2-enyl diphosphate reductase, found in Yersinia enterocolitica serotype O:8 / biotype 1B (strain NCTC 13174 / 8081).